A 363-amino-acid chain; its full sequence is Uroporphyrinogen decarboxylase (363 aa).

Substrate-binding positions include 36–40 (RQAGR), D85, Y160, S215, and H339.

Belongs to the uroporphyrinogen decarboxylase family. In terms of assembly, homodimer.

The protein resides in the cytoplasm. The catalysed reaction is uroporphyrinogen III + 4 H(+) = coproporphyrinogen III + 4 CO2. It participates in porphyrin-containing compound metabolism; protoporphyrin-IX biosynthesis; coproporphyrinogen-III from 5-aminolevulinate: step 4/4. In terms of biological role, catalyzes the decarboxylation of four acetate groups of uroporphyrinogen-III to yield coproporphyrinogen-III. The protein is Uroporphyrinogen decarboxylase of Saccharopolyspora erythraea (strain ATCC 11635 / DSM 40517 / JCM 4748 / NBRC 13426 / NCIMB 8594 / NRRL 2338).